Consider the following 202-residue polypeptide: 7-methyl-GTP pyrophosphatase (202 aa).

The active-site Proton acceptor is D70.

It belongs to the Maf family. YceF subfamily. Requires a divalent metal cation as cofactor.

It localises to the cytoplasm. It catalyses the reaction N(7)-methyl-GTP + H2O = N(7)-methyl-GMP + diphosphate + H(+). Nucleoside triphosphate pyrophosphatase that hydrolyzes 7-methyl-GTP (m(7)GTP). May have a dual role in cell division arrest and in preventing the incorporation of modified nucleotides into cellular nucleic acids. The chain is 7-methyl-GTP pyrophosphatase from Pseudoalteromonas translucida (strain TAC 125).